The primary structure comprises 528 residues: Dihydromonacolin L monooxygenase LovA (528 aa).

Topologically, residues 1–23 (MTVDALTQPHHLLSLAWNDTQQH) are cytoplasmic. Residues 24–44 (GSWFAPLVTTSAGLLCLLLYL) traverse the membrane as a helical; Signal-anchor for type II membrane protein segment. Over 45 to 528 (CSSGRRSDLP…DEDIRLPGSL (484 aa)) the chain is Lumenal. Cys465 is a heme binding site.

Belongs to the cytochrome P450 family. Heme serves as cofactor.

The protein resides in the membrane. The protein localises to the endoplasmic reticulum membrane. It carries out the reaction dihydromonacolin L carboxylate + reduced [NADPH--hemoprotein reductase] + O2 = monacolin L carboxylate + oxidized [NADPH--hemoprotein reductase] + 2 H2O + H(+). The catalysed reaction is monacolin L carboxylate + reduced [NADPH--hemoprotein reductase] + O2 = monacolin J carboxylate + oxidized [NADPH--hemoprotein reductase] + H2O + H(+). It functions in the pathway polyketide biosynthesis; lovastatin biosynthesis. Its function is as follows. Dihydromonacolin L monooxygenase; part of the gene cluster that mediates the biosynthesis of lovastatin (also known as mevinolin, mevacor or monacolin K), a hypolipidemic inhibitor of (3S)-hydroxymethylglutaryl-coenzyme A (HMG-CoA) reductase (HMGR). The first step in the biosynthesis of lovastatin is the production of dihydromonacolin L acid by the lovastatin nonaketide synthase lovB and the trans-acting enoyl reductase lovC via condensation of one acetyl-CoA unit and 8 malonyl-CoA units. Dihydromonacolin L acid is released from lovB by the thioesterase lovG. Next, dihydromonacolin L acid is oxidized by the dihydromonacolin L monooxygenase lovA twice to form monacolin J acid. The 2-methylbutyrate moiety of lovastatin is synthesized by the lovastatin diketide synthase lovF via condensation of one acetyl-CoA unit and one malonyl-CoA unit. Finally, the covalent attachment of this moiety to monacolin J acid is catalyzed by the transesterase lovD to yield lovastatin. LovD has broad substrate specificity and can also convert monacolin J to simvastatin using alpha-dimethylbutanoyl-S-methyl-3-mercaptopropionate (DMB-S-MMP) as the thioester acyl donor, and can also catalyze the reverse reaction and function as hydrolase in vitro. LovD has much higher activity with LovF-bound 2-methylbutanoate than with free diketide substrates. The sequence is that of Dihydromonacolin L monooxygenase LovA from Aspergillus terreus.